The chain runs to 34 residues: Kappa-theraphotoxin-Sc1a (34 aa).

Disulfide bonds link C2–C16, C9–C21, and C15–C28. Position 34 is an isoleucine amide (I34).

It belongs to the neurotoxin 10 (Hwtx-1) family. 57 (ScTx1) subfamily. In terms of tissue distribution, expressed by the venom gland.

It is found in the secreted. Functionally, acts as a gating-modifier to inhibit voltage-gated potassium channels. It inhibits delayed Kv2.1/KCNB1 (IC(50) is 12.7 nM), Kv2.1/Kv9.3 (IC(50) is 7.2 nM) (KCNB1/KCNS3), Kv2.2/KCNB2 (IC(50) is 21.4 nM), and transient Kv4.2/KCND2 (IC(50) is 1.2 nM) channels. This is Kappa-theraphotoxin-Sc1a from Stromatopelma calceatum (Featherleg baboon tarantula).